A 221-amino-acid polypeptide reads, in one-letter code: Glutathione S-transferase U25 (221 aa).

An N-acetylalanine modification is found at Ala-2. Positions 3 to 82 constitute a GST N-terminal domain; it reads DEVILLDFWP…YIDEVWPSKT (80 aa). Glutathione-binding positions include 13–14, 39–40, 53–54, and 66–67; these read SM, NK, KI, and ES. The GST C-terminal domain maps to 88–208; sequence DPYQRAQAKF…LPDSEKIIKF (121 aa). Thr-149 is subject to Phosphothreonine.

The protein belongs to the GST superfamily. Tau family.

The protein localises to the cytoplasm. The protein resides in the cytosol. The enzyme catalyses RX + glutathione = an S-substituted glutathione + a halide anion + H(+). May be involved in the conjugation of reduced glutathione to a wide number of exogenous and endogenous hydrophobic electrophiles and have a detoxification role against certain herbicides. The chain is Glutathione S-transferase U25 (GSTU25) from Arabidopsis thaliana (Mouse-ear cress).